A 297-amino-acid polypeptide reads, in one-letter code: 4-hydroxy-tetrahydrodipicolinate synthase (297 aa).

Thr-47 contacts pyruvate. Tyr-136 serves as the catalytic Proton donor/acceptor. Lys-165 (schiff-base intermediate with substrate) is an active-site residue. Ile-206 is a pyruvate binding site.

It belongs to the DapA family. As to quaternary structure, homotetramer; dimer of dimers.

It localises to the cytoplasm. The enzyme catalyses L-aspartate 4-semialdehyde + pyruvate = (2S,4S)-4-hydroxy-2,3,4,5-tetrahydrodipicolinate + H2O + H(+). Its pathway is amino-acid biosynthesis; L-lysine biosynthesis via DAP pathway; (S)-tetrahydrodipicolinate from L-aspartate: step 3/4. Functionally, catalyzes the condensation of (S)-aspartate-beta-semialdehyde [(S)-ASA] and pyruvate to 4-hydroxy-tetrahydrodipicolinate (HTPA). In Campylobacter fetus subsp. fetus (strain 82-40), this protein is 4-hydroxy-tetrahydrodipicolinate synthase.